A 222-amino-acid chain; its full sequence is UPF0502 protein SO_1867 (222 aa).

Positions 169–193 (EQVSATSLSADSPSADSNSLNAQDR) are enriched in polar residues. A disordered region spans residues 169–195 (EQVSATSLSADSPSADSNSLNAQDRQQ).

It belongs to the UPF0502 family.

This is UPF0502 protein SO_1867 from Shewanella oneidensis (strain ATCC 700550 / JCM 31522 / CIP 106686 / LMG 19005 / NCIMB 14063 / MR-1).